Here is a 247-residue protein sequence, read N- to C-terminus: E3 ubiquitin-protein ligase RNF182 (247 aa).

The RING-type zinc-finger motif lies at 20 to 68 (CKICYNRYNLKQRKPKVLECCHRVCAKCLYKIIDFGDSPQGVIVCPFCR). 2 consecutive transmembrane segments (helical) span residues 184-204 (VLVW…IYLL) and 211-231 (LGVV…VYGF).

Interacts with ATP6V0C.

Its subcellular location is the membrane. It localises to the cytoplasm. It catalyses the reaction S-ubiquitinyl-[E2 ubiquitin-conjugating enzyme]-L-cysteine + [acceptor protein]-L-lysine = [E2 ubiquitin-conjugating enzyme]-L-cysteine + N(6)-ubiquitinyl-[acceptor protein]-L-lysine.. It functions in the pathway protein modification; protein ubiquitination. E3 ubiquitin-protein ligase that mediates the ubiquitination of ATP6V0C and targets it to degradation via the ubiquitin-proteasome pathway. Also plays a role in the inhibition of TLR-triggered innate immune response by mediating 'Lys'-48-linked ubiquitination and subsequent degradation of NF-kappa-B component RELA. The chain is E3 ubiquitin-protein ligase RNF182 (RNF182) from Ailuropoda melanoleuca (Giant panda).